Consider the following 283-residue polypeptide: Light-independent protochlorophyllide reductase iron-sulfur ATP-binding protein (283 aa).

ATP is bound by residues Gly15 to Thr20 and Lys44. Position 19 (Ser19) interacts with Mg(2+). 2 residues coordinate [4Fe-4S] cluster: Cys100 and Cys134. Asn185–Arg186 is a binding site for ATP.

This sequence belongs to the NifH/BchL/ChlL family. In terms of assembly, homodimer. Protochlorophyllide reductase is composed of three subunits; ChlL, ChlN and ChlB. [4Fe-4S] cluster is required as a cofactor.

It catalyses the reaction chlorophyllide a + oxidized 2[4Fe-4S]-[ferredoxin] + 2 ADP + 2 phosphate = protochlorophyllide a + reduced 2[4Fe-4S]-[ferredoxin] + 2 ATP + 2 H2O. The protein operates within porphyrin-containing compound metabolism; chlorophyll biosynthesis (light-independent). Functionally, component of the dark-operative protochlorophyllide reductase (DPOR) that uses Mg-ATP and reduced ferredoxin to reduce ring D of protochlorophyllide (Pchlide) to form chlorophyllide a (Chlide). This reaction is light-independent. The L component serves as a unique electron donor to the NB-component of the complex, and binds Mg-ATP. This is Light-independent protochlorophyllide reductase iron-sulfur ATP-binding protein from Synechococcus sp. (strain JA-2-3B'a(2-13)) (Cyanobacteria bacterium Yellowstone B-Prime).